A 33-amino-acid chain; its full sequence is Cytochrome b6-f complex subunit 8 (33 aa).

Residues 2–22 (LFTLAWASLAAVFSFSIAMVV) traverse the membrane as a helical segment.

This sequence belongs to the PetN family. As to quaternary structure, the 4 large subunits of the cytochrome b6-f complex are cytochrome b6, subunit IV (17 kDa polypeptide, PetD), cytochrome f and the Rieske protein, while the 4 small subunits are PetG, PetL, PetM and PetN. The complex functions as a dimer.

It localises to the cellular thylakoid membrane. Its function is as follows. Component of the cytochrome b6-f complex, which mediates electron transfer between photosystem II (PSII) and photosystem I (PSI), cyclic electron flow around PSI, and state transitions. This chain is Cytochrome b6-f complex subunit 8, found in Synechococcus sp. (strain WH7803).